A 280-amino-acid polypeptide reads, in one-letter code: 2-dehydro-3-deoxyphosphooctonate aldolase (280 aa).

Belongs to the KdsA family.

Its subcellular location is the cytoplasm. It carries out the reaction D-arabinose 5-phosphate + phosphoenolpyruvate + H2O = 3-deoxy-alpha-D-manno-2-octulosonate-8-phosphate + phosphate. Its pathway is carbohydrate biosynthesis; 3-deoxy-D-manno-octulosonate biosynthesis; 3-deoxy-D-manno-octulosonate from D-ribulose 5-phosphate: step 2/3. The protein operates within bacterial outer membrane biogenesis; lipopolysaccharide biosynthesis. In Coxiella burnetii (strain Dugway 5J108-111), this protein is 2-dehydro-3-deoxyphosphooctonate aldolase.